The sequence spans 115 residues: DNA-binding protein STK_13740 (115 aa).

Belongs to the PDCD5 family.

In Sulfurisphaera tokodaii (strain DSM 16993 / JCM 10545 / NBRC 100140 / 7) (Sulfolobus tokodaii), this protein is DNA-binding protein STK_13740.